A 278-amino-acid polypeptide reads, in one-letter code: Dermonecrotic toxin LlSicTox-alphaIII3ii (278 aa).

His-5 is a catalytic residue. Mg(2+)-binding residues include Glu-25 and Asp-27. The active-site Nucleophile is the His-40. A disulfide bond links Cys-44 and Cys-50. Residue Asp-84 coordinates Mg(2+).

The protein belongs to the arthropod phospholipase D family. Class I subfamily. Mg(2+) serves as cofactor. Expressed by the venom gland.

The protein localises to the secreted. It carries out the reaction an N-(acyl)-sphingosylphosphocholine = an N-(acyl)-sphingosyl-1,3-cyclic phosphate + choline. The catalysed reaction is an N-(acyl)-sphingosylphosphoethanolamine = an N-(acyl)-sphingosyl-1,3-cyclic phosphate + ethanolamine. The enzyme catalyses a 1-acyl-sn-glycero-3-phosphocholine = a 1-acyl-sn-glycero-2,3-cyclic phosphate + choline. It catalyses the reaction a 1-acyl-sn-glycero-3-phosphoethanolamine = a 1-acyl-sn-glycero-2,3-cyclic phosphate + ethanolamine. In terms of biological role, dermonecrotic toxins cleave the phosphodiester linkage between the phosphate and headgroup of certain phospholipids (sphingolipid and lysolipid substrates), forming an alcohol (often choline) and a cyclic phosphate. This toxin acts on sphingomyelin (SM). It may also act on ceramide phosphoethanolamine (CPE), lysophosphatidylcholine (LPC) and lysophosphatidylethanolamine (LPE), but not on lysophosphatidylserine (LPS), and lysophosphatidylglycerol (LPG). It acts by transphosphatidylation, releasing exclusively cyclic phosphate products as second products. Induces dermonecrosis, hemolysis, increased vascular permeability, edema, inflammatory response, and platelet aggregation. This Loxosceles laeta (South American recluse spider) protein is Dermonecrotic toxin LlSicTox-alphaIII3ii.